The sequence spans 156 residues: ATP synthase subunit b (156 aa).

Residues leucine 5 to valine 25 traverse the membrane as a helical segment.

The protein belongs to the ATPase B chain family. In terms of assembly, F-type ATPases have 2 components, F(1) - the catalytic core - and F(0) - the membrane proton channel. F(1) has five subunits: alpha(3), beta(3), gamma(1), delta(1), epsilon(1). F(0) has three main subunits: a(1), b(2) and c(10-14). The alpha and beta chains form an alternating ring which encloses part of the gamma chain. F(1) is attached to F(0) by a central stalk formed by the gamma and epsilon chains, while a peripheral stalk is formed by the delta and b chains.

Its subcellular location is the cell inner membrane. F(1)F(0) ATP synthase produces ATP from ADP in the presence of a proton or sodium gradient. F-type ATPases consist of two structural domains, F(1) containing the extramembraneous catalytic core and F(0) containing the membrane proton channel, linked together by a central stalk and a peripheral stalk. During catalysis, ATP synthesis in the catalytic domain of F(1) is coupled via a rotary mechanism of the central stalk subunits to proton translocation. In terms of biological role, component of the F(0) channel, it forms part of the peripheral stalk, linking F(1) to F(0). The protein is ATP synthase subunit b of Acinetobacter baumannii (strain AYE).